Reading from the N-terminus, the 230-residue chain is Probable cobalt-precorrin-2 C(20)-methyltransferase (230 aa).

The protein belongs to the precorrin methyltransferase family.

The enzyme catalyses Co-precorrin-2 + S-adenosyl-L-methionine = Co-precorrin-3 + S-adenosyl-L-homocysteine + H(+). The protein operates within cofactor biosynthesis; adenosylcobalamin biosynthesis; cob(II)yrinate a,c-diamide from sirohydrochlorin (anaerobic route): step 2/10. Functionally, methylates cobalt-precorrin-2 at the C-20 position to produce cobalt-precorrin-3A in the anaerobic cobalamin biosynthesis pathway. This Methanocaldococcus jannaschii (strain ATCC 43067 / DSM 2661 / JAL-1 / JCM 10045 / NBRC 100440) (Methanococcus jannaschii) protein is Probable cobalt-precorrin-2 C(20)-methyltransferase (cbiL).